The primary structure comprises 167 residues: ATP synthase subunit b (167 aa).

The chain crosses the membrane as a helical span at residues 7–25 (SFWLTISFVIFVYLIYRPA).

The protein belongs to the ATPase B chain family. In terms of assembly, F-type ATPases have 2 components, F(1) - the catalytic core - and F(0) - the membrane proton channel. F(1) has five subunits: alpha(3), beta(3), gamma(1), delta(1), epsilon(1). F(0) has three main subunits: a(1), b(2) and c(10-14). The alpha and beta chains form an alternating ring which encloses part of the gamma chain. F(1) is attached to F(0) by a central stalk formed by the gamma and epsilon chains, while a peripheral stalk is formed by the delta and b chains.

It is found in the cell inner membrane. Its function is as follows. F(1)F(0) ATP synthase produces ATP from ADP in the presence of a proton or sodium gradient. F-type ATPases consist of two structural domains, F(1) containing the extramembraneous catalytic core and F(0) containing the membrane proton channel, linked together by a central stalk and a peripheral stalk. During catalysis, ATP synthesis in the catalytic domain of F(1) is coupled via a rotary mechanism of the central stalk subunits to proton translocation. In terms of biological role, component of the F(0) channel, it forms part of the peripheral stalk, linking F(1) to F(0). This chain is ATP synthase subunit b, found in Rickettsia prowazekii (strain Madrid E).